The following is a 120-amino-acid chain: NAD(P)H-quinone oxidoreductase subunit 3, chloroplastic (120 aa).

A run of 3 helical transmembrane segments spans residues 9-29 (IFWA…FISG), 64-84 (MFAL…PWAM), and 88-108 (VLGV…IVGL).

Belongs to the complex I subunit 3 family. NDH is composed of at least 16 different subunits, 5 of which are encoded in the nucleus.

It is found in the plastid. The protein localises to the chloroplast thylakoid membrane. The catalysed reaction is a plastoquinone + NADH + (n+1) H(+)(in) = a plastoquinol + NAD(+) + n H(+)(out). It catalyses the reaction a plastoquinone + NADPH + (n+1) H(+)(in) = a plastoquinol + NADP(+) + n H(+)(out). Its function is as follows. NDH shuttles electrons from NAD(P)H:plastoquinone, via FMN and iron-sulfur (Fe-S) centers, to quinones in the photosynthetic chain and possibly in a chloroplast respiratory chain. The immediate electron acceptor for the enzyme in this species is believed to be plastoquinone. Couples the redox reaction to proton translocation, and thus conserves the redox energy in a proton gradient. The sequence is that of NAD(P)H-quinone oxidoreductase subunit 3, chloroplastic from Panax ginseng (Korean ginseng).